A 78-amino-acid polypeptide reads, in one-letter code: UPF0349 protein YuzB (78 aa).

It belongs to the UPF0349 family.

This Bacillus subtilis (strain 168) protein is UPF0349 protein YuzB (yuzB).